A 241-amino-acid polypeptide reads, in one-letter code: Small ribosomal subunit protein uS2 (241 aa).

This sequence belongs to the universal ribosomal protein uS2 family.

The polypeptide is Small ribosomal subunit protein uS2 (Salmonella agona (strain SL483)).